Reading from the N-terminus, the 89-residue chain is ATP synthase subunit c, sodium ion specific (89 aa).

2 helical membrane-spanning segments follow: residues 9–29 (VVLAASAVGAGAAMIAGIGPG) and 68–88 (GIYSLVIALILLYANPFVGLL).

It belongs to the ATPase C chain family. As to quaternary structure, F-type ATPases have 2 components, F(1) - the catalytic core - and F(0) - the membrane sodium channel. F(1) has five subunits: alpha(3), beta(3), gamma(1), delta(1), epsilon(1). F(0) has three main subunits: a(1), b(2) and c(10-14). The alpha and beta chains form an alternating ring which encloses part of the gamma chain. F(1) is attached to F(0) by a central stalk formed by the gamma and epsilon chains, while a peripheral stalk is formed by the delta and b chains.

The protein localises to the cell membrane. F(1)F(0) ATP synthase produces ATP from ADP in the presence of a proton or sodium gradient. F-type ATPases consist of two structural domains, F(1) containing the extramembraneous catalytic core and F(0) containing the membrane sodium channel, linked together by a central stalk and a peripheral stalk. During catalysis, ATP synthesis in the catalytic domain of F(1) is coupled via a rotary mechanism of the central stalk subunits to sodium translocation. In terms of biological role, key component of the F(0) channel; it plays a direct role in translocation across the membrane. A homomeric c-ring of between 10-14 subunits forms the central stalk rotor element with the F(1) delta and epsilon subunits. This Propionigenium modestum protein is ATP synthase subunit c, sodium ion specific (atpE).